Here is a 134-residue protein sequence, read N- to C-terminus: Beta-synuclein (134 aa).

2 repeat units span residues 20-30 (EKTKQGVTEAA) and 31-41 (EKTKEGVLYVG). The interval 20–67 (EKTKQGVTEAAEKTKEGVLYVGSKTREGVVQGVASVAEKTKEQASHLG) is 4 X 11 AA tandem repeats of [EGS]-K-T-K-[EQ]-[GQ]-V-X(4). One copy of the 3; approximate repeat lies at 42-56 (SKTREGVVQGVASVA). The stretch at 57-67 (EKTKEQASHLG) is repeat 4. Residues 89-134 (FPTDLKPEEVAQEAAEEPLIEPLMEPEGESYEDPPQEEYQEYEPEA) are disordered. Acidic residues predominate over residues 98–134 (VAQEAAEEPLIEPLMEPEGESYEDPPQEEYQEYEPEA). A Phosphoserine; by BARK1, CK2 and GRK5 modification is found at S118.

The protein belongs to the synuclein family. Phosphorylated. Phosphorylation by G-protein coupled receptor kinases (GRK) is more efficient than phosphorylation by CK1, CK2 and CaM-kinase II. In terms of tissue distribution, expressed predominantly in brain; concentrated in presynaptic nerve terminals.

The protein resides in the cytoplasm. In terms of biological role, non-amyloid component of senile plaques found in Alzheimer disease. Could act as a regulator of SNCA aggregation process. Protects neurons from staurosporine and 6-hydroxy dopamine (6OHDA)-stimulated caspase activation in a p53/TP53-dependent manner. Contributes to restore the SNCA anti-apoptotic function abolished by 6OHDA. Not found in the Lewy bodies associated with Parkinson disease. The sequence is that of Beta-synuclein (SNCB) from Homo sapiens (Human).